We begin with the raw amino-acid sequence, 523 residues long: Inosine-5'-monophosphate dehydrogenase 2 (523 aa).

2 consecutive CBS domains span residues 121–183 (FINN…VQDV) and 184–240 (MTKN…PLAS). NAD(+)-binding positions include 278-280 (DSS) and 328-330 (GMG). K(+) is bound by residues glycine 330 and glycine 332. Serine 333 contributes to the IMP binding site. Position 335 (cysteine 335) interacts with K(+). The active-site Thioimidate intermediate is the cysteine 335. Residues 368 to 370 (DGG), 391 to 392 (GG), and 415 to 419 (YRGMG) contribute to the IMP site. The active-site Proton acceptor is the arginine 437. Glutamine 449 contributes to the IMP binding site. K(+) contacts are provided by glutamate 508, glycine 509, and glycine 510.

Belongs to the IMPDH/GMPR family. Homotetramer. Seems to be able to form heterotetramers composed from more than 1 of the 3 IMPDH gene products (IMD2-4). K(+) is required as a cofactor.

The protein localises to the cytoplasm. The enzyme catalyses IMP + NAD(+) + H2O = XMP + NADH + H(+). Its pathway is purine metabolism; XMP biosynthesis via de novo pathway; XMP from IMP: step 1/1. With respect to regulation, mycophenolic acid (MPA) is a non-competitive inhibitor that prevents formation of the closed enzyme conformation by binding to the same site as the amobile flap. In contrast, mizoribine monophosphate (MZP) is a competitive inhibitor that induces the closed conformation. MPA is a potent inhibitor of mammalian IMPDHs but a poor inhibitor of the bacterial enzymes. MZP is a more potent inhibitor of bacterial IMPDH. Its function is as follows. Catalyzes the conversion of inosine 5'-phosphate (IMP) to xanthosine 5'-phosphate (XMP), the first committed and rate-limiting step in the de novo synthesis of guanine nucleotides, and therefore plays an important role in the regulation of cell growth. In contrast to the other IMPDH alleles IMD3 and IMD4, the enzymatic activity of IMD2 seems to be intrinsically drug resistant. This chain is Inosine-5'-monophosphate dehydrogenase 2, found in Saccharomyces cerevisiae (strain ATCC 204508 / S288c) (Baker's yeast).